Consider the following 538-residue polypeptide: Sterile alpha motif domain-containing protein 1 (538 aa).

The segment covering 1–11 has biased composition (pro residues); that stretch reads MAGPPALPPPE. Disordered regions lie at residues 1–30 and 92–247; these read MAGPPALPPPETAAAATTAAAASSSAASPH and SYRN…GAAR. A compositionally biased stretch (low complexity) spans 12–29; that stretch reads TAAAATTAAAASSSAASP. The SAMD1-like winged helix (WH) domain maps to 23 to 99; the sequence is SSSAASPHYQ…SISYRNAARV (77 aa). Threonine 107 is subject to Phosphothreonine. The span at 115-125 shows a compositional bias: low complexity; the sequence is PRGAPAAAAAA. The span at 126–139 shows a compositional bias: pro residues; the sequence is APPPTPAPPPPPAP. The segment covering 140 to 158 has biased composition (low complexity); it reads VAAAAPARAPRAAAAAATA. The residue at position 161 (serine 161) is a Phosphoserine. The span at 168-177 shows a compositional bias: low complexity; it reads GPRAQRAAPL. Residues 178 to 236 show a composition bias toward pro residues; sequence AAPPPAPAAPPAVAPPAGPRRAPPPAVAAREPPLPPPPQPPAPPQQQQPPPPQPQPPPE. Over residues 237–247 the composition is skewed to low complexity; sequence GGAVRAGGAAR. Residue serine 261 is modified to Phosphoserine. Over residues 282-291 the composition is skewed to basic and acidic residues; the sequence is AARGRLERTR. The tract at residues 282–458 is disordered; sequence AARGRLERTR…PPGRKEKPSD (177 aa). Residues 328–351 are compositionally biased toward acidic residues; the sequence is KEEEEDDDEDEDEEDDVSEGSEVP. A compositionally biased stretch (pro residues) spans 425–436; the sequence is SPSPVPLPPGKP. The SAM domain occupies 462–530; the sequence is WTVMDVVEYF…KVLQQGHFED (69 aa).

In terms of assembly, homopolymerize into a closed pentameric ring. Interacts (via SAM domain) with L3MBTL3 (via SAM domain); the interaction mediates L3MBTL3 binding to chromatin. Interacts (via WH domain) with KDM1A; the interaction modulates KDM1A function. As to expression, expressed in atherosclerotic lesions, not in normal intima. Expressed in foam cells.

It localises to the nucleus. Its subcellular location is the chromosome. The protein resides in the secreted. Its function is as follows. Unmethylated CpG islands (CGIs)-binding protein which localizes to H3K4me3-decorated CGIs, where it acts as a transcriptional repressor. Tethers L3MBTL3 to chromatin and interacts with the KDM1A histone demethylase complex to modulate H3K4me2 and H3K4me3 levels at CGIs. Plays a role in atherogenesis by binding with LDL on cell surface and promoting LDL oxidation which leads to the formation of foam cell. This Homo sapiens (Human) protein is Sterile alpha motif domain-containing protein 1.